A 124-amino-acid chain; its full sequence is Putative membrane protein insertion efficiency factor (124 aa).

The segment covering methionine 1–threonine 12 has biased composition (basic and acidic residues). Residues methionine 1–glycine 26 form a disordered region.

It belongs to the UPF0161 family.

The protein localises to the cell inner membrane. Functionally, could be involved in insertion of integral membrane proteins into the membrane. The sequence is that of Putative membrane protein insertion efficiency factor from Rhizobium meliloti (strain 1021) (Ensifer meliloti).